The sequence spans 158 residues: Chromobox protein homolog 7 (158 aa).

In terms of domain architecture, Chromo spans 11 to 69 (FAVESIRKKRVRKGKVEYLVKWKGWPPKYSTWEPEEHILDPRLVMAYEEKEERDRASGY). Residues 60–127 (KEERDRASGY…WTPTLPSSEV (68 aa)) are disordered. Over residues 68–78 (GYRKRGPKPRR) the composition is skewed to basic residues.

In terms of assembly, component of a PRC1-like complex. Distinct PRC1-like core complexes are composed of a RING1 subunit (RING1B or RING1A), one of the six PCGF proteins (PCGF1-6), one PHC protein (PHC1-3) and one of the CBX proteins (CBX2, CBX4, CBX6, CBX7 or CBX8). The composition of the PRC1 complex may differ between the PRC1 complex in pluripotent embryonic stem cells containing RNF2, CBX7 and PCGF2, and the PRC1 complex in differentiating cells containing RNF2, CBX2, CBX4 and BMI1. Interacts with RING1. Interacts with RNF2, PHC1 and PCGF2. Interacts (via chromodomain) with histone H3K9Me3 and H3K27me3. Interacts with H3K9Me2 and H4K20Me1. Interacts (via chromodomain) with single-stranded and double-stranded RNA; RNA binding seems to be required for the localization to chromatin. Interacts with PCGF1, PCGF3, PCGF5 and PCGF6. In terms of tissue distribution, expressed in embryonic stem cells.

It is found in the nucleus. Its subcellular location is the chromosome. In terms of biological role, component of a Polycomb group (PcG) multiprotein PRC1-like complex, a complex class required to maintain the transcriptionally repressive state of many genes, including Hox genes, throughout development. PcG PRC1 complex acts via chromatin remodeling and modification of histones; it mediates monoubiquitination of histone H2A 'Lys-119', rendering chromatin heritably changed in its expressibility. Promotes histone H3 trimethylation at 'Lys-9' (H3K9me3). Binds to histone H3 trimethylated at 'Lys-9' (H3K9me3) or at 'Lys-27' (H3K27me3). Trimethylation at 'Lys-27' (H3K27me3) is important for chromatin recruitment. May possibly also bind trimethylated lysine residues in other proteins (in vitro). Binds non-coding, single-stranded RNA and double-stranded RNA. Plays a role in the timely repression of differentiation-specific genes in pluripotent embryonic stem cells to maintain the undifferentiated state. Regulator of cellular lifespan by maintaining the repression of CDKN2A, but not by inducing telomerase activity. The protein is Chromobox protein homolog 7 (Cbx7) of Mus musculus (Mouse).